The following is a 401-amino-acid chain: Nicotinate phosphoribosyltransferase (401 aa).

A Phosphohistidine; by autocatalysis modification is found at histidine 221.

This sequence belongs to the NAPRTase family. In terms of processing, transiently phosphorylated on a His residue during the reaction cycle. Phosphorylation strongly increases the affinity for substrates and increases the rate of nicotinate D-ribonucleotide production. Dephosphorylation regenerates the low-affinity form of the enzyme, leading to product release.

It carries out the reaction nicotinate + 5-phospho-alpha-D-ribose 1-diphosphate + ATP + H2O = nicotinate beta-D-ribonucleotide + ADP + phosphate + diphosphate. Its pathway is cofactor biosynthesis; NAD(+) biosynthesis; nicotinate D-ribonucleotide from nicotinate: step 1/1. Catalyzes the synthesis of beta-nicotinate D-ribonucleotide from nicotinate and 5-phospho-D-ribose 1-phosphate at the expense of ATP. This Pectobacterium carotovorum subsp. carotovorum (strain PC1) protein is Nicotinate phosphoribosyltransferase.